A 235-amino-acid polypeptide reads, in one-letter code: Pyridoxine 5'-phosphate synthase (235 aa).

A 3-amino-2-oxopropyl phosphate-binding site is contributed by Asn-6. 8–9 contributes to the 1-deoxy-D-xylulose 5-phosphate binding site; it reads DH. Arg-17 is a binding site for 3-amino-2-oxopropyl phosphate. The Proton acceptor role is filled by His-42. 2 residues coordinate 1-deoxy-D-xylulose 5-phosphate: Arg-44 and His-49. The active-site Proton acceptor is the Glu-69. Thr-99 provides a ligand contact to 1-deoxy-D-xylulose 5-phosphate. His-189 functions as the Proton donor in the catalytic mechanism. 3-amino-2-oxopropyl phosphate-binding positions include Gly-190 and 211-212; that span reads GH.

It belongs to the PNP synthase family. Homooctamer; tetramer of dimers.

The protein resides in the cytoplasm. It catalyses the reaction 3-amino-2-oxopropyl phosphate + 1-deoxy-D-xylulose 5-phosphate = pyridoxine 5'-phosphate + phosphate + 2 H2O + H(+). Its pathway is cofactor biosynthesis; pyridoxine 5'-phosphate biosynthesis; pyridoxine 5'-phosphate from D-erythrose 4-phosphate: step 5/5. Functionally, catalyzes the complicated ring closure reaction between the two acyclic compounds 1-deoxy-D-xylulose-5-phosphate (DXP) and 3-amino-2-oxopropyl phosphate (1-amino-acetone-3-phosphate or AAP) to form pyridoxine 5'-phosphate (PNP) and inorganic phosphate. This chain is Pyridoxine 5'-phosphate synthase, found in Chlorobium chlorochromatii (strain CaD3).